A 409-amino-acid chain; its full sequence is Chaetoglobosin A biosynthesis cluster protein C (409 aa).

Residues 51 to 120 (DLPANSRKLT…VKRQPQLRTR (70 aa)) form the HTH CENPB-type domain. The segment at residues 84–113 (RGVEDMANHLLRERDAPPVGKLWAHNFVKR) is a DNA-binding region (H-T-H motif). 2 disordered regions span residues 243 to 269 (PTHPDSRPGTAQPWASKTPYNAQETRS) and 320 to 350 (ANEPLSKRRKAKRTRIQLGGPLTVQDAQDPL). Positions 255-269 (PWASKTPYNAQETRS) are enriched in polar residues.

Its subcellular location is the nucleus. Part of the gene cluster that mediates the biosynthesis of chaetoglobosin A which has a unique inhibitory activity against actin polymerization in mammalian cells. Chaetoglobosin A and its intermediates are involved in the morphological differentiation of C.globosum. The first step of the pathway is the synthesis of prochaetoglobosin I via condensation of one acetyl-CoA, 8 malonyl-CoA, and a L-tryptophan molecule by the PKS-NRPS hybrid synthetase cheA, followed by reduction of backbone double bond to install desired geometry by the enoyl reductase cheB. Further multiple oxidation steps performed by the cytochrome P450 monooxygenases cheE and cheG, as well as by the FAD-linked oxidoreductase cheF, lead to the formation of chaetoglobosin A. Depending on the order of action of these reductases, distinct intermediates can be identified. Within the pathway, the cytochrome P450 monooxygenase cheE catalyzes a stereospecific epoxidation on prochaetoglobosin I, cytoglobosin D, and chaetoglobosin J intermediates. The FAD-linked oxidoreductase cheF performs dehydrogenation of the C-20 hydroxyl groups in the 20-dihyrochaetoglobosin A and cytoglobosin D intermediates. Finally, the cytochrome P450 monooxygenase cheG can catalyze the stereospecific dihydroxylation of prochaetoglobosin I and prochaetoglobosin IV at C-19 and C-20, respectively. The Diels-Alderase cheD may play a role in the post-PKS-NRPS biosynthetic steps catalyzing Diels-Alder cyclization. This is Chaetoglobosin A biosynthesis cluster protein C from Chaetomium globosum (strain ATCC 6205 / CBS 148.51 / DSM 1962 / NBRC 6347 / NRRL 1970) (Soil fungus).